A 168-amino-acid polypeptide reads, in one-letter code: Small ribosomal subunit protein uS5 (168 aa).

The 64-residue stretch at 17-80 folds into the S5 DRBM domain; sequence IEDQLVAVNR…EDGKKKMINV (64 aa).

Belongs to the universal ribosomal protein uS5 family. In terms of assembly, part of the 30S ribosomal subunit. Contacts proteins S4 and S8.

Functionally, with S4 and S12 plays an important role in translational accuracy. Its function is as follows. Located at the back of the 30S subunit body where it stabilizes the conformation of the head with respect to the body. This chain is Small ribosomal subunit protein uS5, found in Lactobacillus helveticus (strain DPC 4571).